Reading from the N-terminus, the 126-residue chain is Fluoride-specific ion channel FluC (126 aa).

Helical transmembrane passes span Phe4–Ile24, Gly35–Met55, Ile71–Val91, and Leu104–Met124. Residues Gly78 and Thr81 each contribute to the Na(+) site.

It belongs to the fluoride channel Fluc/FEX (TC 1.A.43) family.

Its subcellular location is the cell inner membrane. The catalysed reaction is fluoride(in) = fluoride(out). Its activity is regulated as follows. Na(+) is not transported, but it plays an essential structural role and its presence is essential for fluoride channel function. Its function is as follows. Fluoride-specific ion channel. Important for reducing fluoride concentration in the cell, thus reducing its toxicity. The sequence is that of Fluoride-specific ion channel FluC from Aliivibrio salmonicida (strain LFI1238) (Vibrio salmonicida (strain LFI1238)).